A 459-amino-acid polypeptide reads, in one-letter code: Anthocyanidin 3-O-glucoside 2''-O-glucosyltransferase (459 aa).

H20 acts as the Proton acceptor in catalysis. H20 serves as a coordination point for an anthocyanidin. The active-site Charge relay is the D117. UDP-alpha-D-glucose is bound by residues T138, V335, Q337, H352, W355, S357, and E360. An an anthocyanidin-binding site is contributed by G375. UDP-alpha-D-glucose-binding residues include D376 and Q377.

The protein belongs to the UDP-glycosyltransferase family.

It catalyses the reaction an anthocyanidin 3-O-beta-D-glucoside + UDP-alpha-D-glucose = an anthocyanidin 3-O-sophoroside + UDP + 2 H(+). The protein operates within pigment biosynthesis; anthocyanin biosynthesis. Its function is as follows. Glycosyltransferase that mediates the glucosylation of anthocyanidin 3-O-glucosides to yield anthocyanidin 3-O-sophorosides. 3-O-sophoroside derivatives are required for the color of flowers. The sequence is that of Anthocyanidin 3-O-glucoside 2''-O-glucosyltransferase (3GGT) from Ipomoea purpurea (Common morning glory).